A 608-amino-acid polypeptide reads, in one-letter code: RAS guanyl-releasing protein 2 (608 aa).

The 123-residue stretch at 4-126 folds into the N-terminal Ras-GEF domain; that stretch reads TLDLDKGCTV…SLIDIESVPT (123 aa). Phosphoserine is present on residues S116, S117, and S147. The region spanning 154-387 is the Ras-GEF domain; it reads EPMELAEHLT…YQLSLQREPR (234 aa). The interval 382 to 405 is disordered; sequence LQREPRSKSSPTSPTSCTPPPRPP. 2 consecutive EF-hand domains span residues 426 to 461 and 463 to 490; these read HIEKMVESVFRNFDVDGDGHISQEEFQIIRGNFPYL and AFGDLDQNQDGCISREEMISYFLRSSSV. Ca(2+)-binding residues include D439, D441, D443, H445, E450, D468, N470, D472, C474, and E479. The Phorbol-ester/DAG-type zinc finger occupies 498–548; that stretch reads VHNLQESNSLRPVACRHCKALILGIYKQGLKCRACGVNCHKQCKDRLSVEC. Phosphoserine occurs at positions 554 and 575. Positions 555 to 596 are disordered; sequence VSLEGSAPSPSPTHTHHRAFSFSLPRPGRRSSRPPEIREEEV.

It belongs to the RASGRP family. Forms a signaling complex with RAP1 and BRAF. Interacts with F-actin. Interacts with RAP1. As to expression, expressed in striatal neurons (at protein level). Expressed in the hematopoietic system. Detected in olfactory structures and deep cortical layers of brain.

Its subcellular location is the cytoplasm. It is found in the cytosol. The protein resides in the cell membrane. The protein localises to the synapse. It localises to the synaptosome. Its subcellular location is the cell projection. It is found in the ruffle membrane. In terms of biological role, functions as a calcium- and DAG-regulated nucleotide exchange factor specifically activating Rap through the exchange of bound GDP for GTP. May also activate other GTPases such as RRAS, RRAS2, NRAS, KRAS but not HRAS. Functions in aggregation of platelets and adhesion of T-lymphocytes and neutrophils probably through inside-out integrin activation. May function in the muscarinic acetylcholine receptor M1/CHRM1 signaling pathway. The polypeptide is RAS guanyl-releasing protein 2 (Rasgrp2) (Rattus norvegicus (Rat)).